We begin with the raw amino-acid sequence, 327 residues long: Cytochrome f (327 aa).

The first 24 residues, 1–24, serve as a signal peptide directing secretion; sequence MKRIYLALCALLLLLGTGSRPAAA. Heme-binding residues include tyrosine 25, cysteine 45, cysteine 48, and histidine 49. Residues 293–313 traverse the membrane as a helical segment; it reads VKWLVAFLAAVAITQLLLVLK.

This sequence belongs to the cytochrome f family. The 4 large subunits of the cytochrome b6-f complex are cytochrome b6, subunit IV (17 kDa polypeptide, PetD), cytochrome f and the Rieske protein, while the 4 small subunits are PetG, PetL, PetM and PetN. The complex functions as a dimer. Heme is required as a cofactor.

It is found in the cellular thylakoid membrane. Its function is as follows. Component of the cytochrome b6-f complex, which mediates electron transfer between photosystem II (PSII) and photosystem I (PSI), cyclic electron flow around PSI, and state transitions. The sequence is that of Cytochrome f from Synechococcus sp. (strain JA-3-3Ab) (Cyanobacteria bacterium Yellowstone A-Prime).